The following is a 305-amino-acid chain: tRNA dimethylallyltransferase (305 aa).

Position 8–15 (8–15) interacts with ATP; that stretch reads GPTAVGKT. A substrate-binding site is contributed by 10 to 15; sequence TAVGKT. The tract at residues 33-36 is interaction with substrate tRNA; it reads DSRQ.

Belongs to the IPP transferase family. As to quaternary structure, monomer. Mg(2+) is required as a cofactor.

It carries out the reaction adenosine(37) in tRNA + dimethylallyl diphosphate = N(6)-dimethylallyladenosine(37) in tRNA + diphosphate. Its function is as follows. Catalyzes the transfer of a dimethylallyl group onto the adenine at position 37 in tRNAs that read codons beginning with uridine, leading to the formation of N6-(dimethylallyl)adenosine (i(6)A). The sequence is that of tRNA dimethylallyltransferase from Thermotoga neapolitana (strain ATCC 49049 / DSM 4359 / NBRC 107923 / NS-E).